We begin with the raw amino-acid sequence, 394 residues long: 1-deoxy-D-xylulose 5-phosphate reductoisomerase (394 aa).

NADPH contacts are provided by T10, G11, S12, I13, G38, R39, N40, and N123. 1-deoxy-D-xylulose 5-phosphate is bound at residue K124. E125 serves as a coordination point for NADPH. Residue D149 coordinates Mn(2+). Residues S150, E151, S175, and H198 each coordinate 1-deoxy-D-xylulose 5-phosphate. Position 151 (E151) interacts with Mn(2+). G204 provides a ligand contact to NADPH. 1-deoxy-D-xylulose 5-phosphate is bound by residues S211, N216, K217, and E220. Residue E220 participates in Mn(2+) binding.

Belongs to the DXR family. Requires Mg(2+) as cofactor. Mn(2+) is required as a cofactor.

The catalysed reaction is 2-C-methyl-D-erythritol 4-phosphate + NADP(+) = 1-deoxy-D-xylulose 5-phosphate + NADPH + H(+). The protein operates within isoprenoid biosynthesis; isopentenyl diphosphate biosynthesis via DXP pathway; isopentenyl diphosphate from 1-deoxy-D-xylulose 5-phosphate: step 1/6. Its function is as follows. Catalyzes the NADPH-dependent rearrangement and reduction of 1-deoxy-D-xylulose-5-phosphate (DXP) to 2-C-methyl-D-erythritol 4-phosphate (MEP). In Cereibacter sphaeroides (strain ATCC 17029 / ATH 2.4.9) (Rhodobacter sphaeroides), this protein is 1-deoxy-D-xylulose 5-phosphate reductoisomerase.